The primary structure comprises 477 residues: Cysteine--tRNA ligase (477 aa).

Zn(2+) is bound at residue cysteine 42. The 'HIGH' region signature appears at 44–54 (ATVQGLPHIGH). 3 residues coordinate Zn(2+): cysteine 220, histidine 245, and glutamate 249. Residues 276-280 (KMSKS) carry the 'KMSKS' region motif. Residue lysine 279 coordinates ATP.

This sequence belongs to the class-I aminoacyl-tRNA synthetase family. In terms of assembly, monomer. It depends on Zn(2+) as a cofactor.

Its subcellular location is the cytoplasm. The enzyme catalyses tRNA(Cys) + L-cysteine + ATP = L-cysteinyl-tRNA(Cys) + AMP + diphosphate. This is Cysteine--tRNA ligase from Mycolicibacterium smegmatis (strain ATCC 700084 / mc(2)155) (Mycobacterium smegmatis).